A 208-amino-acid polypeptide reads, in one-letter code: Thymidylate kinase (208 aa).

Residue 10-17 (GPEGSGKT) participates in ATP binding.

It belongs to the thymidylate kinase family.

It carries out the reaction dTMP + ATP = dTDP + ADP. Phosphorylation of dTMP to form dTDP in both de novo and salvage pathways of dTTP synthesis. This is Thymidylate kinase from Bacillus cereus (strain ATCC 14579 / DSM 31 / CCUG 7414 / JCM 2152 / NBRC 15305 / NCIMB 9373 / NCTC 2599 / NRRL B-3711).